Consider the following 800-residue polypeptide: Kolavenyl diphosphate synthase TPS5, chloroplastic (800 aa).

The transit peptide at 1-75 (MSLAYSQATS…VILTAEKSVD (75 aa)) directs the protein to the chloroplast. Lys244 contacts substrate. 2 residues coordinate Mg(2+): Asp375 and Asp377. Residues 375-378 (DVDD) carry the DXDD motif motif. Substrate is bound at residue Lys461.

This sequence belongs to the terpene synthase family. Mg(2+) is required as a cofactor. In terms of tissue distribution, mostly expressed in trichomes of leaves and fruits.

Its subcellular location is the plastid. The protein localises to the chloroplast. It carries out the reaction (2E,6E,10E)-geranylgeranyl diphosphate = (+)-kolavenyl diphosphate. Its pathway is secondary metabolite biosynthesis; terpenoid biosynthesis. Its function is as follows. Involved in the biosynthesis of labdane-type diterpenoid including cleroda-dienols, and peregrinol lactones and furan derivatives, dopaminergic diterpenoids that can bind to dopamine receptors in the human pituitary gland, have probably ability to lower prolactin levels, and are used to treat menstrual cycle disorders (e.g. premenstrual syndrome and mastodynia). Terpene synthase that produces kolavenyl diphosphate from geranylgeranyl diphosphate (GGPP). The polypeptide is Kolavenyl diphosphate synthase TPS5, chloroplastic (Vitex agnus-castus (Chaste tree)).